The chain runs to 542 residues: 4-coumarate--CoA ligase-like 1 (542 aa).

Residues Ser189, Ser190, Gly191, Thr192, Thr193, and Lys197 each contribute to the ATP site. (E)-4-coumaroyl-AMP is bound at residue Tyr237. Arg258 serves as a coordination point for CoA. The tract at residues 260-331 is SBD1; the sequence is DLRIFLNALI…AKFPNVQVQE (72 aa). (E)-4-coumaroyl-AMP is bound by residues Ala309, Glu331, Ala332, and Thr336. Residues Glu331, Ala332, Thr336, Asp420, and Arg435 each coordinate ATP. Residues 332-399 form an SBD2 region; that stretch reads AYGLTEHSCI…VRSQCVMQGY (68 aa). The (E)-4-coumaroyl-AMP site is built by Lys437 and Lys441. CoA is bound by residues Lys443 and Gly444. Lys526 contributes to the ATP binding site.

This sequence belongs to the ATP-dependent AMP-binding enzyme family. In terms of assembly, interacts with TKPR1, PKSA and PKSB. The cofactor is Mg(2+). In terms of tissue distribution, mostly confined to anther tapetal cells.

It localises to the endoplasmic reticulum. It carries out the reaction (E)-4-coumarate + ATP + CoA = (E)-4-coumaroyl-CoA + AMP + diphosphate. The catalysed reaction is (E)-4-coumarate + ATP + H(+) = (E)-4-coumaroyl-AMP + diphosphate. It catalyses the reaction (E)-4-coumaroyl-AMP + CoA = (E)-4-coumaroyl-CoA + AMP + H(+). Functionally, carboxylate--CoA ligase that may use 4-coumarate as substrate. Follows a two-step reaction mechanism, wherein the carboxylate substrate first undergoes adenylation by ATP, followed by a thioesterification in the presence of CoA to yield the final CoA thioester. This chain is 4-coumarate--CoA ligase-like 1, found in Arabidopsis thaliana (Mouse-ear cress).